We begin with the raw amino-acid sequence, 101 residues long: Citrate lyase acyl carrier protein (101 aa).

S14 carries the post-translational modification O-(phosphoribosyl dephospho-coenzyme A)serine.

The protein belongs to the CitD family. As to quaternary structure, oligomer with a subunit composition of (alpha,beta,gamma)6.

The protein resides in the cytoplasm. Covalent carrier of the coenzyme of citrate lyase. The protein is Citrate lyase acyl carrier protein of Latilactobacillus sakei subsp. sakei (strain 23K) (Lactobacillus sakei subsp. sakei).